The sequence spans 378 residues: Rhodopsin (378 aa).

The Extracellular segment spans residues 1 to 53 (MMSIASGPSHAAYTWTAQGGGFGNQTVVDKVPPEMLHLVDAHWYQFPPMNPLW). The N-linked (GlcNAc...) asparagine glycan is linked to Asn24. A helical transmembrane segment spans residues 54 to 78 (HAILGFVIGILGMISVIGNGMVIYI). The Cytoplasmic segment spans residues 79–90 (FTTTKSLRTPSN). The chain crosses the membrane as a helical span at residues 91–115 (LLVINLAISDFLMMLSMSPAMVINC). Over 116–130 (YYETWVLGPLVCELY) the chain is Extracellular. Cys127 and Cys204 are oxidised to a cystine. The chain crosses the membrane as a helical span at residues 131-150 (GLTGSLFGCGSIWTMTMIAF). At 151-169 (DRYNVIVKGLSAKPMTING) the chain is on the cytoplasmic side. The chain crosses the membrane as a helical span at residues 170–193 (ALLRILGIWFFSLGWTIAPMFGWN). Topologically, residues 194-217 (RYVPEGNMTACGTDYLTKDLLSRS) are extracellular. The N-linked (GlcNAc...) asparagine glycan is linked to Asn200. The chain crosses the membrane as a helical span at residues 218-245 (YILVYSFFCYFLPLFLIIYSYFFIIQAV). The Cytoplasmic segment spans residues 246-280 (AAHEKNMREQAKKMNVASLRSAENQSTSAECKLAK). A helical transmembrane segment spans residues 281–304 (VALMTISLWFMAWTPYLVINYAGI). The Extracellular segment spans residues 305-311 (FETVKIN). The helical transmembrane segment at 312 to 336 (PLFTIWGSLFAKANAVYNPIVYGIS) threads the bilayer. N6-(retinylidene)lysine is present on Lys323. Residues 337-378 (HPKYRAALFQRFPSLACSSGPAGADTLSTTTTVTEGTEKPAA) lie on the Cytoplasmic side of the membrane. The segment at 356–378 (GPAGADTLSTTTTVTEGTEKPAA) is disordered. Over residues 362 to 371 (TLSTTTTVTE) the composition is skewed to low complexity.

The protein belongs to the G-protein coupled receptor 1 family. Opsin subfamily. In terms of processing, phosphorylated on some or all of the serine and threonine residues present in the C-terminal region.

Its subcellular location is the membrane. Visual pigments are the light-absorbing molecules that mediate vision. They consist of an apoprotein, opsin, covalently linked to cis-retinal. This chain is Rhodopsin, found in Cataglyphis bombycina (Saharan silver ant).